Here is a 98-residue protein sequence, read N- to C-terminus: Small ribosomal subunit protein bS6 (98 aa).

The protein belongs to the bacterial ribosomal protein bS6 family.

Its function is as follows. Binds together with bS18 to 16S ribosomal RNA. This chain is Small ribosomal subunit protein bS6, found in Staphylococcus haemolyticus (strain JCSC1435).